A 43-amino-acid chain; its full sequence is Kappa-actitoxin-Avd4p (43 aa).

3 cysteine pairs are disulfide-bonded: Cys-4-Cys-39, Cys-6-Cys-32, and Cys-22-Cys-40.

It is found in the secreted. It localises to the nematocyst. Its function is as follows. Blocks Kv3 voltage-gated potassium channels. Reduces blood pressure. In Anemonia viridis (Snakelocks anemone), this protein is Kappa-actitoxin-Avd4p.